We begin with the raw amino-acid sequence, 243 residues long: Retrotransposon Gag-like protein 6 (243 aa).

Over residues 1 to 12 (MVQPRTSKTESP) the composition is skewed to polar residues. The tract at residues 1–22 (MVQPRTSKTESPASAPGASAQM) is disordered. Residues 29–69 (LTSLRLTNSALRREASTLRAEKANLTNMLESVMAELTLLRT) adopt a coiled-coil conformation. Disordered regions lie at residues 84 to 105 (SAIT…PEPF) and 218 to 243 (TGSC…GRNL). The span at 85-94 (AITSNGTRPM) shows a compositional bias: polar residues.

The protein belongs to the LDOC1 family. In terms of tissue distribution, widely expressed.

This Mus musculus (Mouse) protein is Retrotransposon Gag-like protein 6.